A 147-amino-acid chain; its full sequence is Large ribosomal subunit protein uL15 (147 aa).

Over residues Met1–Arg14 the composition is skewed to basic and acidic residues. The disordered stretch occupies residues Met1–Gln54. Gly residues-rich tracts occupy residues Thr23–Ser35 and Ser42–Gly52.

Belongs to the universal ribosomal protein uL15 family. As to quaternary structure, part of the 50S ribosomal subunit.

Functionally, binds to the 23S rRNA. This Alkaliphilus oremlandii (strain OhILAs) (Clostridium oremlandii (strain OhILAs)) protein is Large ribosomal subunit protein uL15.